Reading from the N-terminus, the 141-residue chain is MAETDRATDKPAGAPKPAKTASPERVAAFRTGLSAEARAAALLIAKGYRILAKRFRTPHGEIDLIARKRGLVAFVEVKARASLDDAAYAVTPRQQQRIIDAAQAWLMAHPDHAELELRFDAILVAPRSLPRHLMAAFDASP.

Residues 1–24 (MAETDRATDKPAGAPKPAKTASPE) form a disordered region. Residues 10-19 (KPAGAPKPAK) show a composition bias toward low complexity.

It belongs to the UPF0102 family.

This is UPF0102 protein BRADO0179 from Bradyrhizobium sp. (strain ORS 278).